The following is a 314-amino-acid chain: MPEVQTDHPETAELSKPQLRMVDLNLLTVFDAVMQEQNITRAAHVLGMSQPAVSNAVARLKVMFNDELFVRYGRGIQPTARAFQLFGSVRQALQLVQNELPGSGFEPASSERVFHLCVCSPLDSILTSQIYNHIEQIAPNIHVMFKSSLNQNTEHQLRYQETEFVISYEDFHRPEFTSVPLFKDEMVLVASKNHPTIKGPLLKHDVYNEQHAAVSLDRFASFSQPWYDTVDKQASIAYQGMAMMSVLSVVSQTHLVAIAPRWLAEEFAESLELQVLPLPLKQNSRTCYLSWHEAAGRDKGHQWMEEQLVSICKR.

Positions 22 to 79 (VDLNLLTVFDAVMQEQNITRAAHVLGMSQPAVSNAVARLKVMFNDELFVRYGRGIQPT) constitute an HTH lysR-type domain. Residues 39 to 58 (ITRAAHVLGMSQPAVSNAVA) constitute a DNA-binding region (H-T-H motif).

This sequence belongs to the LysR transcriptional regulatory family.

Functionally, a global transcription factor. Activates transcription of the 9 following operons; yjjQ-bglJ, yjjP, acrEF, ybdO, yjcRQP, casABCDE12, rhsD-ybbC, fepE and gltF, in most cases it probably interferes with silencing by H-NS and activates transcription. Represses transcription of the 3 following operons; uxaCA, sdaCB and btsT. H-NS repression of the bgl operon, leading to the ability to metabolize some beta-glucosides. It also directly activates the bgl operon. Activation is H-NS and BglJ-RcsB independent. The protein is HTH-type transcriptional regulator LeuO (leuO) of Escherichia coli (strain K12).